A 285-amino-acid polypeptide reads, in one-letter code: ADNRRPIWNLAHMVNAVAQIPSFLDLGANALEADVTFKGSVPTYTYHGTPCDFGRDCIRWEYFNVFLKTLKEYTTPGNAKYRDGFILFVLDLKTGSLSNDQVRPAGENVAKELLQNYWNNGNNGGRAYVVLSLPDIGHYEFVRGFKEVLKKEGHEDLLEKVGYDFSGPYLPSLPTLDATHEAYKKAGVDGHIWLSDGLTNFSPLGDMARLKEAIKSRDSANGFINKIYYWSVDKVSTTKAALDVGVDGIMTNHPNVLIGVLKENGYNDKYRLATYDDNPWETFKN.

The active site involves H12. Positions 32 and 34 each coordinate Mg(2+). Catalysis depends on H47, which acts as the Nucleophile. A disulfide bond links C51 and C57. D91 contacts Mg(2+).

The protein belongs to the arthropod phospholipase D family. Class I subfamily. Mg(2+) is required as a cofactor. As to expression, expressed by the venom gland.

It is found in the secreted. The enzyme catalyses an N-(acyl)-sphingosylphosphocholine = an N-(acyl)-sphingosyl-1,3-cyclic phosphate + choline. The catalysed reaction is an N-(acyl)-sphingosylphosphoethanolamine = an N-(acyl)-sphingosyl-1,3-cyclic phosphate + ethanolamine. It catalyses the reaction a 1-acyl-sn-glycero-3-phosphocholine = a 1-acyl-sn-glycero-2,3-cyclic phosphate + choline. It carries out the reaction a 1-acyl-sn-glycero-3-phosphoethanolamine = a 1-acyl-sn-glycero-2,3-cyclic phosphate + ethanolamine. In terms of biological role, dermonecrotic toxins cleave the phosphodiester linkage between the phosphate and headgroup of certain phospholipids (sphingolipid and lysolipid substrates), forming an alcohol (often choline) and a cyclic phosphate. This toxin acts on sphingomyelin (SM) with high activity (56.8 U/mg). It may also act on ceramide phosphoethanolamine (CPE), lysophosphatidylcholine (LPC) and lysophosphatidylethanolamine (LPE), but not on lysophosphatidylserine (LPS), and lysophosphatidylglycerol (LPG). It acts by transphosphatidylation, releasing exclusively cyclic phosphate products as second products. Induces dermonecrosis, hemolysis, increased vascular permeability, edema, inflammatory response, and platelet aggregation. Is lethal to mice. This Loxosceles laeta (South American recluse spider) protein is Dermonecrotic toxin LlSicTox-alphaIII1ii.